Reading from the N-terminus, the 130-residue chain is Biotin carboxyl carrier protein (130 aa).

The tract at residues 20-64 is disordered; that stretch reads EISESSVPAATPITPTTENTRAASDQKQQSQTPSPAATASAANTM. Residues 23-46 are compositionally biased toward polar residues; the sequence is ESSVPAATPITPTTENTRAASDQK. A compositionally biased stretch (low complexity) spans 47-64; the sequence is QQSQTPSPAATASAANTM. The region spanning 55 to 130 is the Biotinyl-binding domain; the sequence is AATASAANTM…NAGDNLITIA (76 aa). Position 96 is an N6-biotinyllysine (Lys-96).

The protein is Biotin carboxyl carrier protein (bcc) of Streptococcus mutans serotype c (strain ATCC 700610 / UA159).